The sequence spans 373 residues: Dual-specificity RNA methyltransferase RlmN (373 aa).

Glu-94 functions as the Proton acceptor in the catalytic mechanism. One can recognise a Radical SAM core domain in the interval Glu-100–Asp-339. Cys-107 and Cys-344 are oxidised to a cystine. [4Fe-4S] cluster is bound by residues Cys-114, Cys-118, and Cys-121. Residues Gly-168 to Glu-169, Ser-200, Ser-222 to His-224, and Asn-301 contribute to the S-adenosyl-L-methionine site. Cys-344 functions as the S-methylcysteine intermediate in the catalytic mechanism.

Belongs to the radical SAM superfamily. RlmN family. The cofactor is [4Fe-4S] cluster.

The protein resides in the cytoplasm. It carries out the reaction adenosine(2503) in 23S rRNA + 2 reduced [2Fe-2S]-[ferredoxin] + 2 S-adenosyl-L-methionine = 2-methyladenosine(2503) in 23S rRNA + 5'-deoxyadenosine + L-methionine + 2 oxidized [2Fe-2S]-[ferredoxin] + S-adenosyl-L-homocysteine. The enzyme catalyses adenosine(37) in tRNA + 2 reduced [2Fe-2S]-[ferredoxin] + 2 S-adenosyl-L-methionine = 2-methyladenosine(37) in tRNA + 5'-deoxyadenosine + L-methionine + 2 oxidized [2Fe-2S]-[ferredoxin] + S-adenosyl-L-homocysteine. In terms of biological role, specifically methylates position 2 of adenine 2503 in 23S rRNA and position 2 of adenine 37 in tRNAs. m2A2503 modification seems to play a crucial role in the proofreading step occurring at the peptidyl transferase center and thus would serve to optimize ribosomal fidelity. The protein is Dual-specificity RNA methyltransferase RlmN of Shewanella frigidimarina (strain NCIMB 400).